We begin with the raw amino-acid sequence, 467 residues long: Argininosuccinate lyase (467 aa).

This sequence belongs to the lyase 1 family. Argininosuccinate lyase subfamily.

Its subcellular location is the cytoplasm. It catalyses the reaction 2-(N(omega)-L-arginino)succinate = fumarate + L-arginine. It participates in amino-acid biosynthesis; L-arginine biosynthesis; L-arginine from L-ornithine and carbamoyl phosphate: step 3/3. This Methylibium petroleiphilum (strain ATCC BAA-1232 / LMG 22953 / PM1) protein is Argininosuccinate lyase.